The sequence spans 453 residues: Flap endonuclease 1 (453 aa).

Residues 1-105 (MGIKGLTGLL…SVLAKRFARR (105 aa)) form an N-domain region. Asp34 serves as a coordination point for Mg(2+). DNA contacts are provided by Arg47 and Arg71. Residues Asp87, Glu159, Glu161, Asp180, and Asp182 each contribute to the Mg(2+) site. Positions 123-254 (DVDKLARRQV…KTALKLMREH (132 aa)) are I-domain. Glu159 serves as a coordination point for DNA. DNA is bound by residues Gly232 and Asp234. A Mg(2+)-binding site is contributed by Asp234. Disordered regions lie at residues 273–336 (EEIK…VASS) and 409–453 (RLDG…KSKN). Over residues 320–333 (KSPKKKAPAKKKKV) the composition is skewed to basic residues. An interaction with PCNA region spans residues 406–414 (QQGRLDGFF). The segment covering 417 to 446 (KPKEPAAKDTGKGKGKATKGEKRKAEEKGS) has biased composition (basic and acidic residues).

The protein belongs to the XPG/RAD2 endonuclease family. FEN1 subfamily. In terms of assembly, interacts with PCNA. Three molecules of FEN1 bind to one PCNA trimer with each molecule binding to one PCNA monomer. PCNA stimulates the nuclease activity without altering cleavage specificity. Mg(2+) serves as cofactor. Post-translationally, phosphorylated. Phosphorylation upon DNA damage induces relocalization to the nuclear plasma.

The protein resides in the nucleus. It localises to the nucleolus. The protein localises to the nucleoplasm. Its subcellular location is the mitochondrion. Structure-specific nuclease with 5'-flap endonuclease and 5'-3' exonuclease activities involved in DNA replication and repair. During DNA replication, cleaves the 5'-overhanging flap structure that is generated by displacement synthesis when DNA polymerase encounters the 5'-end of a downstream Okazaki fragment. It enters the flap from the 5'-end and then tracks to cleave the flap base, leaving a nick for ligation. Also involved in the long patch base excision repair (LP-BER) pathway, by cleaving within the apurinic/apyrimidinic (AP) site-terminated flap. Acts as a genome stabilization factor that prevents flaps from equilibrating into structures that lead to duplications and deletions. Also possesses 5'-3' exonuclease activity on nicked or gapped double-stranded DNA, and exhibits RNase H activity. Also involved in replication and repair of rDNA and in repairing mitochondrial DNA. The polypeptide is Flap endonuclease 1 (Cryptococcus neoformans var. neoformans serotype D (strain B-3501A) (Filobasidiella neoformans)).